Here is a 59-residue protein sequence, read N- to C-terminus: Large ribosomal subunit protein uL30 (59 aa).

The protein belongs to the universal ribosomal protein uL30 family. As to quaternary structure, part of the 50S ribosomal subunit.

The polypeptide is Large ribosomal subunit protein uL30 (Nocardia farcinica (strain IFM 10152)).